The sequence spans 207 residues: Guanylate kinase (207 aa).

The Guanylate kinase-like domain maps to 4-184 (NMYYAISAPS…TLNKIKTIII (181 aa)). 11 to 18 (APSGTGKS) is an ATP binding site.

It belongs to the guanylate kinase family.

The protein localises to the cytoplasm. It carries out the reaction GMP + ATP = GDP + ADP. In terms of biological role, essential for recycling GMP and indirectly, cGMP. The protein is Guanylate kinase of Wigglesworthia glossinidia brevipalpis.